Reading from the N-terminus, the 526-residue chain is Transcription factor MYC1 (526 aa).

Positions 330–351 (MFPSQNSGLNQDDPSDRRKENE) are disordered. A compositionally biased stretch (polar residues) spans 332–341 (PSQNSGLNQD). In terms of domain architecture, bHLH spans 333-382 (SQNSGLNQDDPSDRRKENEKFSVLRTMVPTVNEVDKESILNNTIKYLQEL).

As to quaternary structure, homodimer. Interacts with MYB75/PAP1, MYB90/PAP2, MYB4, MYB5, MYB6, MYB23, MYB82, MYB113, MYB114, TT2, MYB0/GL1, and MYB66/WER. As to expression, mostly expressed in developing seeds. Also detected in stems and leaves.

Its subcellular location is the nucleus. Functionally, trancsription activator, when associated with MYB75/PAP1 or MYB90/PAP2. The sequence is that of Transcription factor MYC1 (BHLH12) from Arabidopsis thaliana (Mouse-ear cress).